Consider the following 415-residue polypeptide: Glucose-1-phosphate adenylyltransferase (415 aa).

Residues tyrosine 100, glycine 165, 182-183 (EK), and serine 200 each bind alpha-D-glucose 1-phosphate.

The protein belongs to the bacterial/plant glucose-1-phosphate adenylyltransferase family. Homotetramer.

It catalyses the reaction alpha-D-glucose 1-phosphate + ATP + H(+) = ADP-alpha-D-glucose + diphosphate. It functions in the pathway glycan biosynthesis; glycogen biosynthesis. In terms of biological role, involved in the biosynthesis of ADP-glucose, a building block required for the elongation reactions to produce glycogen. Catalyzes the reaction between ATP and alpha-D-glucose 1-phosphate (G1P) to produce pyrophosphate and ADP-Glc. The polypeptide is Glucose-1-phosphate adenylyltransferase (Bifidobacterium animalis subsp. lactis (strain AD011)).